A 556-amino-acid chain; its full sequence is Arginine--tRNA ligase (556 aa).

Residues 132–142 (ANPTGDLHLGH) carry the 'HIGH' region motif.

Belongs to the class-I aminoacyl-tRNA synthetase family. As to quaternary structure, monomer.

It is found in the cytoplasm. It carries out the reaction tRNA(Arg) + L-arginine + ATP = L-arginyl-tRNA(Arg) + AMP + diphosphate. In Listeria monocytogenes serotype 4b (strain F2365), this protein is Arginine--tRNA ligase.